The primary structure comprises 151 residues: Large ribosomal subunit protein uL16 (151 aa).

The protein belongs to the universal ribosomal protein uL16 family. Part of the 50S ribosomal subunit.

Binds 23S rRNA and is also seen to make contacts with the A and possibly P site tRNAs. This chain is Large ribosomal subunit protein uL16, found in Chloroflexus aurantiacus (strain ATCC 29364 / DSM 637 / Y-400-fl).